We begin with the raw amino-acid sequence, 193 residues long: NAD(P)H-quinone oxidoreductase subunit I (193 aa).

2 consecutive 4Fe-4S ferredoxin-type domains span residues 56-85 and 96-125; these read GRIH…VDWE and KHYS…MTEE. Residues Cys65, Cys68, Cys71, Cys75, Cys105, Cys108, Cys111, and Cys115 each coordinate [4Fe-4S] cluster. The tract at residues 174–193 is disordered; that stretch reads NLPKGSQRAGQHPEDLVKAE. The span at 184 to 193 shows a compositional bias: basic and acidic residues; it reads QHPEDLVKAE.

The protein belongs to the complex I 23 kDa subunit family. In terms of assembly, NDH-1 is composed of at least 11 different subunits. [4Fe-4S] cluster serves as cofactor.

The protein localises to the cellular thylakoid membrane. The enzyme catalyses a plastoquinone + NADH + (n+1) H(+)(in) = a plastoquinol + NAD(+) + n H(+)(out). It carries out the reaction a plastoquinone + NADPH + (n+1) H(+)(in) = a plastoquinol + NADP(+) + n H(+)(out). Functionally, NDH-1 shuttles electrons from an unknown electron donor, via FMN and iron-sulfur (Fe-S) centers, to quinones in the respiratory and/or the photosynthetic chain. The immediate electron acceptor for the enzyme in this species is believed to be plastoquinone. Couples the redox reaction to proton translocation, and thus conserves the redox energy in a proton gradient. This is NAD(P)H-quinone oxidoreductase subunit I from Synechocystis sp. (strain ATCC 27184 / PCC 6803 / Kazusa).